The primary structure comprises 332 residues: Fructose-1,6-bisphosphatase class 1 (332 aa).

Positions 89, 110, 112, and 113 each coordinate Mg(2+). Substrate-binding positions include 113–116 (DGSS), N206, Y239, 257–259 (YLY), and K269. E275 provides a ligand contact to Mg(2+).

It belongs to the FBPase class 1 family. In terms of assembly, homotetramer. The cofactor is Mg(2+).

Its subcellular location is the cytoplasm. It carries out the reaction beta-D-fructose 1,6-bisphosphate + H2O = beta-D-fructose 6-phosphate + phosphate. It participates in carbohydrate biosynthesis; gluconeogenesis. This chain is Fructose-1,6-bisphosphatase class 1, found in Shigella sonnei (strain Ss046).